The primary structure comprises 366 residues: tRNA(Met) cytidine acetate ligase (366 aa).

ATP-binding positions include 7-20 (IAEFNPFHNGHQYL), Gly101, Asn145, and Arg170.

The protein belongs to the TmcAL family.

It localises to the cytoplasm. It catalyses the reaction cytidine(34) in elongator tRNA(Met) + acetate + ATP = N(4)-acetylcytidine(34) in elongator tRNA(Met) + AMP + diphosphate. Functionally, catalyzes the formation of N(4)-acetylcytidine (ac(4)C) at the wobble position of elongator tRNA(Met), using acetate and ATP as substrates. First activates an acetate ion to form acetyladenylate (Ac-AMP) and then transfers the acetyl group to tRNA to form ac(4)C34. The protein is tRNA(Met) cytidine acetate ligase of Pediococcus pentosaceus (strain ATCC 25745 / CCUG 21536 / LMG 10740 / 183-1w).